Reading from the N-terminus, the 435-residue chain is 3-phosphoshikimate 1-carboxyvinyltransferase (435 aa).

Residues lysine 22, serine 23, and arginine 27 each coordinate 3-phosphoshikimate. Lysine 22 contacts phosphoenolpyruvate. Phosphoenolpyruvate contacts are provided by glycine 95 and arginine 123. Residues serine 168, glutamine 170, aspartate 319, and lysine 346 each coordinate 3-phosphoshikimate. Glutamine 170 is a binding site for phosphoenolpyruvate. Aspartate 319 (proton acceptor) is an active-site residue. Residues arginine 350 and arginine 393 each coordinate phosphoenolpyruvate.

The protein belongs to the EPSP synthase family. As to quaternary structure, monomer.

It is found in the cytoplasm. It carries out the reaction 3-phosphoshikimate + phosphoenolpyruvate = 5-O-(1-carboxyvinyl)-3-phosphoshikimate + phosphate. The protein operates within metabolic intermediate biosynthesis; chorismate biosynthesis; chorismate from D-erythrose 4-phosphate and phosphoenolpyruvate: step 6/7. Functionally, catalyzes the transfer of the enolpyruvyl moiety of phosphoenolpyruvate (PEP) to the 5-hydroxyl of shikimate-3-phosphate (S3P) to produce enolpyruvyl shikimate-3-phosphate and inorganic phosphate. This Chloroflexus aggregans (strain MD-66 / DSM 9485) protein is 3-phosphoshikimate 1-carboxyvinyltransferase.